Here is a 514-residue protein sequence, read N- to C-terminus: 23S rRNA (uracil(1939)-C(5))-methyltransferase RlmD (514 aa).

[4Fe-4S] cluster-binding residues include Cys70, Cys76, Cys79, and Cys158. Residues Gln272, Phe301, Asn306, Glu322, Asn350, and Asp371 each contribute to the S-adenosyl-L-methionine site. Cys398 acts as the Nucleophile in catalysis.

Belongs to the class I-like SAM-binding methyltransferase superfamily. RNA M5U methyltransferase family. RlmD subfamily.

The catalysed reaction is uridine(1939) in 23S rRNA + S-adenosyl-L-methionine = 5-methyluridine(1939) in 23S rRNA + S-adenosyl-L-homocysteine + H(+). Catalyzes the formation of 5-methyl-uridine at position 1939 (m5U1939) in 23S rRNA. The protein is 23S rRNA (uracil(1939)-C(5))-methyltransferase RlmD of Chromobacterium violaceum (strain ATCC 12472 / DSM 30191 / JCM 1249 / CCUG 213 / NBRC 12614 / NCIMB 9131 / NCTC 9757 / MK).